Here is a 119-residue protein sequence, read N- to C-terminus: Dihydroneopterin aldolase (119 aa).

Substrate-binding positions include E21, Y53, and I72 to E73. K99 functions as the Proton donor/acceptor in the catalytic mechanism.

Belongs to the DHNA family.

The catalysed reaction is 7,8-dihydroneopterin = 6-hydroxymethyl-7,8-dihydropterin + glycolaldehyde. It functions in the pathway cofactor biosynthesis; tetrahydrofolate biosynthesis; 2-amino-4-hydroxy-6-hydroxymethyl-7,8-dihydropteridine diphosphate from 7,8-dihydroneopterin triphosphate: step 3/4. In terms of biological role, catalyzes the conversion of 7,8-dihydroneopterin to 6-hydroxymethyl-7,8-dihydropterin. The chain is Dihydroneopterin aldolase (folB) from Streptococcus pyogenes serotype M3 (strain ATCC BAA-595 / MGAS315).